A 1527-amino-acid polypeptide reads, in one-letter code: DNA (cytosine-5)-methyltransferase 1A (1527 aa).

Disordered regions lie at residues 1–62 and 661–718; these read MAKS…PKRA and GDTK…KEIK. Acidic residues-rich tracts occupy residues 25–36 and 664–692; these read EPVENENLESEF and KEED…EVNV. The segment covering 709 to 718 has biased composition (basic and acidic residues); sequence SSADTRKEIK. 2 consecutive BAH domains span residues 742–874 and 910–1049; these read LSIS…FSLP and ITYN…KQLP. In terms of domain architecture, SAM-dependent MTase C5-type spans 1092–1526; sequence LATLDIFAGC…RKLKQAIDAK (435 aa). Cys-1197 is an active-site residue.

Belongs to the class I-like SAM-binding methyltransferase superfamily. C5-methyltransferase family. Expressed in roots and inflorescences. Expressed in roots, panicles, anthers, pistils, endosperm and imbibed embryos. Expressed in tissues containing actively replicating and dividing cells, such as shoot and root meristems.

It localises to the nucleus. It catalyses the reaction a 2'-deoxycytidine in DNA + S-adenosyl-L-methionine = a 5-methyl-2'-deoxycytidine in DNA + S-adenosyl-L-homocysteine + H(+). Probably methylates CpG residues and maintains DNA methylation. May be involved in methylation-dependent gene silencing. May play a minor role in the maintenance of DNA methylation. This chain is DNA (cytosine-5)-methyltransferase 1A, found in Oryza sativa subsp. japonica (Rice).